A 142-amino-acid polypeptide reads, in one-letter code: Small ribosomal subunit protein bS6 (142 aa).

The tract at residues asparagine 110–glutamate 142 is disordered.

It belongs to the bacterial ribosomal protein bS6 family.

In terms of biological role, binds together with bS18 to 16S ribosomal RNA. In Helicobacter pylori (strain G27), this protein is Small ribosomal subunit protein bS6.